The sequence spans 405 residues: Riboflavin biosynthesis protein RibBA (405 aa).

The interval 1–205 is DHBP synthase; the sequence is MEEIKLNTIE…IKDLIAYRLK (205 aa). Residues 30-31, D35, 144-148, and E168 contribute to the D-ribulose 5-phosphate site; these read RE and RAGHT. A Mg(2+)-binding site is contributed by E31. H147 contributes to the Mg(2+) binding site. The tract at residues 206–405 is GTP cyclohydrolase II; it reads QESIVEKGVE…RMGHELHNIK (200 aa). A GTP-binding site is contributed by 256–260; that stretch reads RMHSS. Zn(2+) is bound by residues C261, C272, and C274. GTP contacts are provided by residues Q277, 299–301, and T321; that span reads EGR. D333 functions as the Proton acceptor; for GTP cyclohydrolase activity in the catalytic mechanism. R335 serves as the catalytic Nucleophile; for GTP cyclohydrolase activity. Residues T356 and K361 each contribute to the GTP site.

The protein in the N-terminal section; belongs to the DHBP synthase family. This sequence in the C-terminal section; belongs to the GTP cyclohydrolase II family. Mg(2+) serves as cofactor. Mn(2+) is required as a cofactor. Requires Zn(2+) as cofactor.

It carries out the reaction D-ribulose 5-phosphate = (2S)-2-hydroxy-3-oxobutyl phosphate + formate + H(+). The catalysed reaction is GTP + 4 H2O = 2,5-diamino-6-hydroxy-4-(5-phosphoribosylamino)-pyrimidine + formate + 2 phosphate + 3 H(+). The protein operates within cofactor biosynthesis; riboflavin biosynthesis; 2-hydroxy-3-oxobutyl phosphate from D-ribulose 5-phosphate: step 1/1. Its pathway is cofactor biosynthesis; riboflavin biosynthesis; 5-amino-6-(D-ribitylamino)uracil from GTP: step 1/4. Its function is as follows. Catalyzes the conversion of D-ribulose 5-phosphate to formate and 3,4-dihydroxy-2-butanone 4-phosphate. Functionally, catalyzes the conversion of GTP to 2,5-diamino-6-ribosylamino-4(3H)-pyrimidinone 5'-phosphate (DARP), formate and pyrophosphate. The sequence is that of Riboflavin biosynthesis protein RibBA from Porphyromonas gingivalis (strain ATCC 33277 / DSM 20709 / CIP 103683 / JCM 12257 / NCTC 11834 / 2561).